A 445-amino-acid polypeptide reads, in one-letter code: Ktr system potassium uptake protein B (445 aa).

The next 12 membrane-spanning stretches (helical) occupy residues 19–39, 46–66, 79–99, 127–147, 161–181, 196–216, 230–250, 286–306, 313–333, 351–371, 377–397, and 408–428; these read VLAI…MLPI, SWID…LAVV, VIMG…VLIV, IGLV…AALI, GLFA…FSLW, LVIT…FDVM, LMLT…FILE, FGSM…IGAG, GIKL…LRGK, ALAV…ALTI, FLQI…TMGL, and IIIV…FSFA.

The protein belongs to the TrkH potassium transport family. Ktr (TC 2.A.38.4) subfamily. Homodimer. Part of the KtrAB complex formed by an octameric catalytic ring of KtrA and a membrane associated dimer of KtrB forming a potassium channel.

It localises to the cell membrane. Its function is as follows. Integral membrane subunit of the KtrAB potassium uptake transporter. The 2 major potassium transporter complexes KtrAB and KtrCD confer resistance to both suddenly imposed and prolonged osmotic stress. This is Ktr system potassium uptake protein B (ktrB) from Bacillus subtilis (strain 168).